We begin with the raw amino-acid sequence, 136 residues long: SPbeta prophage-derived uncharacterized protein YonI (136 aa).

The chain is SPbeta prophage-derived uncharacterized protein YonI (yonI) from Bacillus subtilis (strain 168).